The chain runs to 296 residues: Protoheme IX farnesyltransferase (296 aa).

9 helical membrane passes run 29–49 (LSGLVIVTSAGGLALAPGHVA), 54–74 (ALTVLATAAVVGAANALNCWM), 98–118 (FTALGLGIMVPVFALPVLALV), 121–141 (PLTAALAFVALVTYVAVYTPM), 147–167 (LALLVGAVPGAIPPLMGWTAA), 175–195 (GLALFALLFAWQLPHFLAVSI), 221–241 (WIAATAAALVPVSLLLVPLRV), 246–266 (YGAVAAVLGVALAGYAFAGVG), and 275–295 (NFFLATILYLTLLFVALFLGA).

This sequence belongs to the UbiA prenyltransferase family. Protoheme IX farnesyltransferase subfamily.

Its subcellular location is the cell inner membrane. It carries out the reaction heme b + (2E,6E)-farnesyl diphosphate + H2O = Fe(II)-heme o + diphosphate. It participates in porphyrin-containing compound metabolism; heme O biosynthesis; heme O from protoheme: step 1/1. Converts heme B (protoheme IX) to heme O by substitution of the vinyl group on carbon 2 of heme B porphyrin ring with a hydroxyethyl farnesyl side group. This chain is Protoheme IX farnesyltransferase, found in Anaeromyxobacter sp. (strain Fw109-5).